Reading from the N-terminus, the 525-residue chain is Mannuronan C5-epimerase AlgG (525 aa).

The N-terminal stretch at 1–29 (MNVQRKLASTQLKPVLLGVLLATSAWSQA) is a signal peptide. PbH1 repeat units follow at residues 287 to 309 (ADDV…DPHD), 311 to 334 (SERL…IVSR), 336 to 358 (VNNS…VLDR), 360 to 382 (SEHN…TLYE), and 383 to 405 (SSNN…RMRN). Catalysis depends on His308, which acts as the Proton acceptor.

The protein belongs to the D-mannuronate C5-epimerase family.

The protein localises to the periplasm. The catalysed reaction is [(1-&gt;4)-beta-D-mannuronosyl](n) = [alginate](n). The protein operates within glycan biosynthesis; alginate biosynthesis. Its activity is regulated as follows. Inhibited by zinc. Functionally, catalyzes the epimerization of beta-D-mannuronate to alpha-L-guluronate during the synthesis of the linear polysaccharide alginate. In addition, is part of a periplasmic protein complex that protects alginate from degradation by AlgL by channeling the newly formed alginate polymer through a scaffold that transfers the alginate polymer through the periplasmic space to the outer membrane secretin AlgE. This is Mannuronan C5-epimerase AlgG from Azotobacter vinelandii.